The primary structure comprises 155 residues: SsrA-binding protein (155 aa).

Belongs to the SmpB family.

It is found in the cytoplasm. Functionally, required for rescue of stalled ribosomes mediated by trans-translation. Binds to transfer-messenger RNA (tmRNA), required for stable association of tmRNA with ribosomes. tmRNA and SmpB together mimic tRNA shape, replacing the anticodon stem-loop with SmpB. tmRNA is encoded by the ssrA gene; the 2 termini fold to resemble tRNA(Ala) and it encodes a 'tag peptide', a short internal open reading frame. During trans-translation Ala-aminoacylated tmRNA acts like a tRNA, entering the A-site of stalled ribosomes, displacing the stalled mRNA. The ribosome then switches to translate the ORF on the tmRNA; the nascent peptide is terminated with the 'tag peptide' encoded by the tmRNA and targeted for degradation. The ribosome is freed to recommence translation, which seems to be the essential function of trans-translation. The protein is SsrA-binding protein of Oenococcus oeni (strain ATCC BAA-331 / PSU-1).